We begin with the raw amino-acid sequence, 110 residues long: BET1-like protein (110 aa).

At 1 to 85 (MADPWNRGHG…MVRSGRDNRK (85 aa)) the chain is on the cytoplasmic side. The region spanning 14–76 (DMLDAENKRM…TGSVKRFSTM (63 aa)) is the t-SNARE coiled-coil homology domain. A helical; Anchor for type IV membrane protein transmembrane segment spans residues 86 to 106 (ILCYVSVGLVVAFFLLYYLVS). The Lumenal portion of the chain corresponds to 107–110 (RMQN).

As to quaternary structure, component of a SNARE complex consisting of stx5, ykt6, gosr2 and bet1l.

The protein resides in the golgi apparatus membrane. Functionally, vesicle SNARE required for targeting and fusion of retrograde transport vesicles with the Golgi complex. Required for the integrity of the Golgi complex. The sequence is that of BET1-like protein (bet1l) from Danio rerio (Zebrafish).